The following is a 361-amino-acid chain: Chitinase-3-like protein 1 (361 aa).

Residues 1–361 (YKLICYYTSW…SAVKDVLAEV (361 aa)) form the GH18 domain. An intrachain disulfide couples Cys-5 to Cys-30. N-linked (GlcNAc...) asparagine glycosylation occurs at Asn-39. Chitin is bound by residues 49-50 (EW), 76-79 (GGWN), Tyr-120, 183-186 (LTYD), and Arg-241. An intrachain disulfide couples Cys-278 to Cys-342. The interval 302 to 316 (QWVAYDDQESVKNKA) is important for AKT1 activation and IL8 production. Trp-330 provides a ligand contact to chitin. Asn-345 carries N-linked (GlcNAc...) asparagine glycosylation.

It belongs to the glycosyl hydrolase 18 family. Monomer. As to expression, detected in mammary gland.

The protein resides in the secreted. It is found in the extracellular space. It localises to the cytoplasm. The protein localises to the perinuclear region. Its subcellular location is the endoplasmic reticulum. Functionally, carbohydrate-binding lectin with a preference for chitin. Has no chitinase activity. May play a role in tissue remodeling and in the capacity of cells to respond to and cope with changes in their environment. Plays a role in T-helper cell type 2 (Th2) inflammatory response and IL-13-induced inflammation, regulating allergen sensitization, inflammatory cell apoptosis, dendritic cell accumulation and M2 macrophage differentiation. Facilitates invasion of pathogenic enteric bacteria into colonic mucosa and lymphoid organs. Mediates activation of AKT1 signaling pathway and subsequent IL8 production in colonic epithelial cells. Regulates antibacterial responses in lung by contributing to macrophage bacterial killing, controlling bacterial dissemination and augmenting host tolerance. Also regulates hyperoxia-induced injury, inflammation and epithelial apoptosis in lung. The sequence is that of Chitinase-3-like protein 1 (CHI3L1) from Ovis aries (Sheep).